A 132-amino-acid chain; its full sequence is Small ribosomal subunit protein uS8c (132 aa).

It belongs to the universal ribosomal protein uS8 family. As to quaternary structure, part of the 30S ribosomal subunit.

The protein localises to the plastid. Its subcellular location is the chloroplast. In terms of biological role, one of the primary rRNA binding proteins, it binds directly to 16S rRNA central domain where it helps coordinate assembly of the platform of the 30S subunit. The polypeptide is Small ribosomal subunit protein uS8c (rps8) (Trieres chinensis (Marine centric diatom)).